Consider the following 249-residue polypeptide: 23S rRNA (guanosine-2'-O-)-methyltransferase RlmB (249 aa).

Residues Gly-197, Ile-217, and Leu-226 each contribute to the S-adenosyl-L-methionine site.

Belongs to the class IV-like SAM-binding methyltransferase superfamily. RNA methyltransferase TrmH family. RlmB subfamily.

It localises to the cytoplasm. The catalysed reaction is guanosine(2251) in 23S rRNA + S-adenosyl-L-methionine = 2'-O-methylguanosine(2251) in 23S rRNA + S-adenosyl-L-homocysteine + H(+). In terms of biological role, specifically methylates the ribose of guanosine 2251 in 23S rRNA. In Ralstonia nicotianae (strain ATCC BAA-1114 / GMI1000) (Ralstonia solanacearum), this protein is 23S rRNA (guanosine-2'-O-)-methyltransferase RlmB.